A 289-amino-acid polypeptide reads, in one-letter code: Acetyl-coenzyme A carboxylase carboxyl transferase subunit beta (289 aa).

In terms of domain architecture, CoA carboxyltransferase N-terminal spans 28–289 (VMTKCPECKK…QGGGMAVWQS (262 aa)). 4 residues coordinate Zn(2+): Cys32, Cys35, Cys51, and Cys54. Residues 32 to 54 (CPECKKIMYTKELLKNLKVCVNC) form a C4-type zinc finger.

It belongs to the AccD/PCCB family. As to quaternary structure, acetyl-CoA carboxylase is a heterohexamer composed of biotin carboxyl carrier protein (AccB), biotin carboxylase (AccC) and two subunits each of ACCase subunit alpha (AccA) and ACCase subunit beta (AccD). It depends on Zn(2+) as a cofactor.

It localises to the cytoplasm. It catalyses the reaction N(6)-carboxybiotinyl-L-lysyl-[protein] + acetyl-CoA = N(6)-biotinyl-L-lysyl-[protein] + malonyl-CoA. The protein operates within lipid metabolism; malonyl-CoA biosynthesis; malonyl-CoA from acetyl-CoA: step 1/1. Functionally, component of the acetyl coenzyme A carboxylase (ACC) complex. Biotin carboxylase (BC) catalyzes the carboxylation of biotin on its carrier protein (BCCP) and then the CO(2) group is transferred by the transcarboxylase to acetyl-CoA to form malonyl-CoA. The polypeptide is Acetyl-coenzyme A carboxylase carboxyl transferase subunit beta (Bacillus cereus (strain G9842)).